Here is a 274-residue protein sequence, read N- to C-terminus: 3-methyl-2-oxobutanoate hydroxymethyltransferase (274 aa).

Residues Asp49 and Asp88 each coordinate Mg(2+). 3-methyl-2-oxobutanoate-binding positions include 49–50 (DS), Asp88, and Lys118. Position 120 (Glu120) interacts with Mg(2+). The active-site Proton acceptor is the Glu187.

Belongs to the PanB family. As to quaternary structure, homodecamer; pentamer of dimers. It depends on Mg(2+) as a cofactor.

The protein resides in the cytoplasm. The catalysed reaction is 3-methyl-2-oxobutanoate + (6R)-5,10-methylene-5,6,7,8-tetrahydrofolate + H2O = 2-dehydropantoate + (6S)-5,6,7,8-tetrahydrofolate. It participates in cofactor biosynthesis; (R)-pantothenate biosynthesis; (R)-pantoate from 3-methyl-2-oxobutanoate: step 1/2. Catalyzes the reversible reaction in which hydroxymethyl group from 5,10-methylenetetrahydrofolate is transferred onto alpha-ketoisovalerate to form ketopantoate. The chain is 3-methyl-2-oxobutanoate hydroxymethyltransferase from Allorhizobium ampelinum (strain ATCC BAA-846 / DSM 112012 / S4) (Agrobacterium vitis (strain S4)).